A 156-amino-acid chain; its full sequence is dCTP deaminase (156 aa).

DCTP contacts are provided by residues 79–84 (RSTFAR), D95, Q124, and Y138.

Belongs to the dCTP deaminase family. As to quaternary structure, homotrimer.

It catalyses the reaction dCTP + H2O + H(+) = dUTP + NH4(+). The protein operates within pyrimidine metabolism; dUMP biosynthesis; dUMP from dCTP (dUTP route): step 1/2. Its function is as follows. Catalyzes the deamination of dCTP to dUTP. In Thermococcus sibiricus (strain DSM 12597 / MM 739), this protein is dCTP deaminase.